The sequence spans 520 residues: Ribonuclease Y (520 aa).

A helical transmembrane segment spans residues 3–23 (IVIVVISILLALIVGIVVGYL). The span at 81–118 (RMEAQKQENRLMQKEENLDRKSETLDKRESSLESKEQS) shows a compositional bias: basic and acidic residues. The interval 81–125 (RMEAQKQENRLMQKEENLDRKSETLDKRESSLESKEQSLTEQQQQ) is disordered. Residues 210 to 273 (TVSVVNLPND…EIARMALEKL (64 aa)) enclose the KH domain. The HD domain maps to 336–429 (GLKHSAEVAY…VAAADALSAA (94 aa)).

Belongs to the RNase Y family.

Its subcellular location is the cell membrane. Functionally, endoribonuclease that initiates mRNA decay. The chain is Ribonuclease Y from Oceanobacillus iheyensis (strain DSM 14371 / CIP 107618 / JCM 11309 / KCTC 3954 / HTE831).